The chain runs to 170 residues: ATP synthase subunit b (170 aa).

The helical transmembrane segment at 30–50 (FFFVLAIFLVVLGVIGTFVVP) threads the bilayer.

Belongs to the ATPase B chain family. In terms of assembly, F-type ATPases have 2 components, F(1) - the catalytic core - and F(0) - the membrane proton channel. F(1) has five subunits: alpha(3), beta(3), gamma(1), delta(1), epsilon(1). F(0) has three main subunits: a(1), b(2) and c(10-14). The alpha and beta chains form an alternating ring which encloses part of the gamma chain. F(1) is attached to F(0) by a central stalk formed by the gamma and epsilon chains, while a peripheral stalk is formed by the delta and b chains.

It localises to the cell membrane. F(1)F(0) ATP synthase produces ATP from ADP in the presence of a proton or sodium gradient. F-type ATPases consist of two structural domains, F(1) containing the extramembraneous catalytic core and F(0) containing the membrane proton channel, linked together by a central stalk and a peripheral stalk. During catalysis, ATP synthesis in the catalytic domain of F(1) is coupled via a rotary mechanism of the central stalk subunits to proton translocation. Its function is as follows. Component of the F(0) channel, it forms part of the peripheral stalk, linking F(1) to F(0). This Mycobacterium leprae (strain TN) protein is ATP synthase subunit b.